A 543-amino-acid chain; its full sequence is Glutamyl-tRNA(Gln) amidotransferase subunit B-1, chloroplastic/mitochondrial (543 aa).

Residues 1-47 form a disordered region; sequence MIRAGGPSPSPRGRRAGPIRLPRRAPSSTPTRAKTEEKASADASSRT. The segment covering 12-23 has biased composition (basic residues); the sequence is RGRRAGPIRLPR.

It belongs to the GatB/GatE family. GatB subfamily. In terms of assembly, subunit of the heterotrimeric GatCAB amidotransferase (AdT) complex, composed of A, B and C subunits.

The protein localises to the mitochondrion. It localises to the plastid. The protein resides in the chloroplast. The enzyme catalyses L-glutamyl-tRNA(Gln) + L-glutamine + ATP + H2O = L-glutaminyl-tRNA(Gln) + L-glutamate + ADP + phosphate + H(+). Its function is as follows. Allows the formation of correctly charged Gln-tRNA(Gln) through the transamidation of misacylated Glu-tRNA(Gln) in chloroplasts and mitochondria. The reaction takes place in the presence of glutamine and ATP through an activated gamma-phospho-Glu-tRNA(Gln). The protein is Glutamyl-tRNA(Gln) amidotransferase subunit B-1, chloroplastic/mitochondrial of Micromonas commoda (strain RCC299 / NOUM17 / CCMP2709) (Picoplanktonic green alga).